The sequence spans 196 residues: Aliphatic amidase regulator (196 aa).

The ANTAR domain occupies 129–190 (MAKLKQKTEQ…PILKIAQELL (62 aa)).

Forms a complex with AmiC.

Functionally, positive controlling element of AmiE, the gene for aliphatic amidase. Acts as a transcriptional antitermination factor. It is thought to allow RNA polymerase read through a rho-independent transcription terminator between the AmiE promoter and gene. This chain is Aliphatic amidase regulator (amiR), found in Pseudomonas aeruginosa (strain ATCC 15692 / DSM 22644 / CIP 104116 / JCM 14847 / LMG 12228 / 1C / PRS 101 / PAO1).